A 185-amino-acid polypeptide reads, in one-letter code: uncharacterized protein (185 aa).

The segment at 160-185 (QYTGPAVPSVPTTNLNDIGDPTKTVQ) is disordered.

This is an uncharacterized protein from Saccharomyces cerevisiae (strain ATCC 204508 / S288c) (Baker's yeast).